Here is a 430-residue protein sequence, read N- to C-terminus: Phosphomethylpyrimidine synthase 2 (430 aa).

Residues Asn-66, Met-95, Tyr-124, His-164, 186-188 (SRG), 227-230 (DGFR), and Glu-266 each bind substrate. His-270 provides a ligand contact to Zn(2+). A substrate-binding site is contributed by Tyr-293. His-334 is a binding site for Zn(2+). The [4Fe-4S] cluster site is built by Cys-411, Cys-414, and Cys-418.

The protein belongs to the ThiC family. As to quaternary structure, homodimer. Requires [4Fe-4S] cluster as cofactor.

It catalyses the reaction 5-amino-1-(5-phospho-beta-D-ribosyl)imidazole + S-adenosyl-L-methionine = 4-amino-2-methyl-5-(phosphooxymethyl)pyrimidine + CO + 5'-deoxyadenosine + formate + L-methionine + 3 H(+). It functions in the pathway cofactor biosynthesis; thiamine diphosphate biosynthesis. Its function is as follows. Catalyzes the synthesis of the hydroxymethylpyrimidine phosphate (HMP-P) moiety of thiamine from aminoimidazole ribotide (AIR) in a radical S-adenosyl-L-methionine (SAM)-dependent reaction. This chain is Phosphomethylpyrimidine synthase 2, found in Syntrophotalea carbinolica (strain DSM 2380 / NBRC 103641 / GraBd1) (Pelobacter carbinolicus).